The primary structure comprises 268 residues: Energy-coupling factor transporter transmembrane protein EcfT (268 aa).

5 consecutive transmembrane segments (helical) span residues 28-48, 63-83, 107-127, 152-172, and 248-268; these read FVFL…YLWV, LWFL…TLMM, ILEG…ATIM, LPVH…PTLM, and ISLT…YSGV.

Belongs to the energy-coupling factor EcfT family. Forms a stable energy-coupling factor (ECF) transporter complex composed of 2 membrane-embedded substrate-binding proteins (S component), 2 ATP-binding proteins (A component) and 2 transmembrane proteins (T component). May be able to interact with more than 1 S component at a time.

The protein localises to the cell membrane. In terms of biological role, transmembrane (T) component of an energy-coupling factor (ECF) ABC-transporter complex. Unlike classic ABC transporters this ECF transporter provides the energy necessary to transport a number of different substrates. The chain is Energy-coupling factor transporter transmembrane protein EcfT from Staphylococcus aureus (strain 04-02981).